We begin with the raw amino-acid sequence, 277 residues long: Ribonuclease HII (277 aa).

The 231-residue stretch at 20–250 (KLIIGLDEAG…SKKLLKKIED (231 aa)) folds into the RNase H type-2 domain. A divalent metal cation contacts are provided by Asp-26, Glu-27, and Asp-141.

This sequence belongs to the RNase HII family. Mn(2+) serves as cofactor. The cofactor is Mg(2+).

The protein localises to the cytoplasm. It carries out the reaction Endonucleolytic cleavage to 5'-phosphomonoester.. Functionally, endonuclease that specifically degrades the RNA of RNA-DNA hybrids. The polypeptide is Ribonuclease HII (Methanococcus aeolicus (strain ATCC BAA-1280 / DSM 17508 / OCM 812 / Nankai-3)).